The chain runs to 332 residues: Biotin synthase (332 aa).

One can recognise a Radical SAM core domain in the interval 53-282 (YFGKKVKLNM…TKEIRISGGR (230 aa)). Residues Cys71, Cys75, and Cys78 each coordinate [4Fe-4S] cluster. Residues Cys115, Cys147, Cys207, and Arg277 each coordinate [2Fe-2S] cluster.

Belongs to the radical SAM superfamily. Biotin synthase family. Homodimer. The cofactor is [4Fe-4S] cluster. It depends on [2Fe-2S] cluster as a cofactor.

The enzyme catalyses (4R,5S)-dethiobiotin + (sulfur carrier)-SH + 2 reduced [2Fe-2S]-[ferredoxin] + 2 S-adenosyl-L-methionine = (sulfur carrier)-H + biotin + 2 5'-deoxyadenosine + 2 L-methionine + 2 oxidized [2Fe-2S]-[ferredoxin]. It functions in the pathway cofactor biosynthesis; biotin biosynthesis; biotin from 7,8-diaminononanoate: step 2/2. Catalyzes the conversion of dethiobiotin (DTB) to biotin by the insertion of a sulfur atom into dethiobiotin via a radical-based mechanism. The polypeptide is Biotin synthase (Bacillus thuringiensis (strain Al Hakam)).